A 100-amino-acid chain; its full sequence is Small ribosomal subunit protein uS14c (100 aa).

This sequence belongs to the universal ribosomal protein uS14 family. As to quaternary structure, part of the 30S ribosomal subunit.

It localises to the plastid. The protein localises to the chloroplast. In terms of biological role, binds 16S rRNA, required for the assembly of 30S particles. The polypeptide is Small ribosomal subunit protein uS14c (Aethionema grandiflorum (Persian stone-cress)).